The sequence spans 810 residues: MSKGPGPGGSAASSAPPAATAQVLQAQPEKPQHYTYLKEFRTEQCPLFVQHKCTQHRPYTCFHWHFVNQRRRRSIRRRDGTFNYSPDVYCTKYDEATGLCPEGDECPFLHRTTGDTERRYHLRYYKTGICIHETDSKGNCTKNGLHCAFAHGPHDLRSPVYDIRELQAMEALQNGQTTVEGSIEGQSAGAASHAMIEKILSEEPRWQETAYVLGNYKTEPCKKPPRLCRQGYACPYYHNSKDRRRSPRKHKYRSSPCPNVKHGDEWGDPGKCENGDACQYCHTRTEQQFHPEIYKSTKCNDMQQAGSCPRGPFCAFAHIEPPPLSDDVQPSSAVSSPTQPGPVLYMPSAAGDSVPVSPSSPHAPDLSALLCRNSGLGSPSHLCSSPPGPSRKASNLEGLVFPGESSLAPGSYKKAPGFEREDQVGAEYLKNFKCQAKLKPHSLEPRSQEQPLLQPKQDVLGILPVGSPLTSSISSSITSSLAATPPSPAGTNSTPGMNANALPFYPTSDTVESVIESALDDLDLNEFGVAALEKTFDNSAVPHPSSVTIGGSLLQSSAPVNIPGSLGSSASFHSASPSPPVSLSSHFLQQPQGHLSQSENTFLGTSASHGSLGLNGMNSSIWEHFASGSFSPGTSPAFLSGPGAAELARLRQELDEANGTIKQWEESWKQAKQACDAWKKEAEEAGERASAAGAECELAREQRDALELRVKKLQEELERLHTVPEAQTLPAAPDLEALSLSTLYSIQKQLRVHLEQVDKAVFHMQSVKCLKCQEQTRAVLPCQHAVLCELCAEGSECPVCQPSRAHALQS.

The interval 1–24 (MSKGPGPGGSAASSAPPAATAQVL) is disordered. Residues 10–19 (SAASSAPPAA) show a composition bias toward low complexity. C3H1-type zinc fingers lie at residues 84-113 (YSPD…HRTT), 124-154 (YYKT…HGPH), 215-241 (NYKT…HNSK), 251-285 (KYRS…HTRT), and 293-321 (IYKS…HIEP). The tract at residues 239–265 (NSKDRRRSPRKHKYRSSPCPNVKHGDE) is disordered. S240 is modified (phosphoserine). Residues 241–253 (KDRRRSPRKHKYR) show a composition bias toward basic residues. Phosphoserine occurs at positions 374, 378, 385, and 394. Residues 478 to 497 (TSSLAATPPSPAGTNSTPGM) are disordered. S631 carries the phosphoserine modification. Residues 643 to 727 (GAAELARLRQ…ERLHTVPEAQ (85 aa)) are a coiled coil. The segment at 766 to 801 (SVKCLKCQEQTRAVLPCQHAVLCELCAEGSECPVCQ) adopts an RING-type; degenerate zinc-finger fold.

This sequence belongs to the unkempt family.

It localises to the cytoplasm. Sequence-specific RNA-binding protein which plays an important role in the establishment and maintenance of the early morphology of cortical neurons during embryonic development. Acts as a translation repressor and controls a translationally regulated cell morphology program to ensure proper structuring of the nervous system. Translational control depends on recognition of its binding element within target mRNAs which consists of a mandatory UAG trimer upstream of a U/A-rich motif. Associated with polysomes. This Mus musculus (Mouse) protein is RING finger protein unkempt homolog (Unk).